A 535-amino-acid chain; its full sequence is CTP synthase (535 aa).

The segment at 1–266 (MKTKFIFITG…DEQVVEKLNI (266 aa)) is amidoligase domain. Residue Ser14 participates in CTP binding. Ser14 lines the UTP pocket. ATP is bound by residues 15-20 (SIGKGL) and Asp72. Positions 72 and 140 each coordinate Mg(2+). CTP-binding positions include 147–149 (DIE), 187–192 (KTKPTQ), and Lys223. Residues 187 to 192 (KTKPTQ) and Lys223 contribute to the UTP site. The Glutamine amidotransferase type-1 domain occupies 292 to 534 (RIAIVGKYVN…IGASLTHRNQ (243 aa)). Position 354 (Gly354) interacts with L-glutamine. Cys381 acts as the Nucleophile; for glutamine hydrolysis in catalysis. L-glutamine-binding positions include 382–385 (LGMQ), Glu405, and Arg462. Active-site residues include His507 and Glu509.

This sequence belongs to the CTP synthase family. As to quaternary structure, homotetramer.

It catalyses the reaction UTP + L-glutamine + ATP + H2O = CTP + L-glutamate + ADP + phosphate + 2 H(+). It carries out the reaction L-glutamine + H2O = L-glutamate + NH4(+). The catalysed reaction is UTP + NH4(+) + ATP = CTP + ADP + phosphate + 2 H(+). The protein operates within pyrimidine metabolism; CTP biosynthesis via de novo pathway; CTP from UDP: step 2/2. Its activity is regulated as follows. Allosterically activated by GTP, when glutamine is the substrate; GTP has no effect on the reaction when ammonia is the substrate. The allosteric effector GTP functions by stabilizing the protein conformation that binds the tetrahedral intermediate(s) formed during glutamine hydrolysis. Inhibited by the product CTP, via allosteric rather than competitive inhibition. In terms of biological role, catalyzes the ATP-dependent amination of UTP to CTP with either L-glutamine or ammonia as the source of nitrogen. Regulates intracellular CTP levels through interactions with the four ribonucleotide triphosphates. In Trichlorobacter lovleyi (strain ATCC BAA-1151 / DSM 17278 / SZ) (Geobacter lovleyi), this protein is CTP synthase.